The following is a 3124-amino-acid chain: Collagen alpha-1(XII) chain (3124 aa).

Positions 1–23 (MRTALCSAVAALCAAALLSSIEA) are cleaved as a signal peptide. The 91-residue stretch at 27–117 (PPSDLNFTII…GQLTIQTGGP (91 aa)) folds into the Fibronectin type-III 1 domain. Asn-32 is a glycosylation site (N-linked (GlcNAc...) asparagine). The VWFA 1 domain occupies 139-311 (DLVFLVDGSW…DGIVDIQNEI (173 aa)). The O-linked (Xyl...) (chondroitin sulfate) serine glycan is linked to Ser-328. Residues 335–424 (PASNLVATQI…ITIMEKTQQV (90 aa)) form the Fibronectin type-III 2 domain. One can recognise a VWFA 2 domain in the interval 439–615 (DVVFLVDGSY…RISFELTQSV (177 aa)). 6 Fibronectin type-III domains span residues 633-722 (PAKN…LEVK), 724-815 (APRN…VRGN), 816-906 (PRNL…LEER), 908-998 (SPRN…VSQS), 999-1087 (ARTV…ASPF), and 1089-1179 (PPRN…TLSD). 3 O-linked (Xyl...) (chondroitin sulfate) serine glycosylation sites follow: Ser-797, Ser-890, and Ser-981. N-linked (GlcNAc...) asparagine glycosylation is found at Asn-1006, Asn-1032, and Asn-1044. The tract at residues 1075 to 1100 (KSRKAEGTTASPFKPPRNLRTSDSTM) is disordered. One can recognise a VWFA 3 domain in the interval 1199–1371 (DIVLLVDGSW…SFLASIGEDV (173 aa)). Fibronectin type-III domains are found at residues 1387–1476 (PPSN…YPLS), 1477–1568 (SVRN…LPLP), 1569–1659 (GPRG…VPSP), 1660–1756 (VNLR…TPAP), 1759–1853 (GPRN…TVKN), 1854–1939 (MLVY…LERG), 1940–2030 (TPRN…LPRS), 2031–2121 (GPRN…VGLL), 2122–2210 (PPQN…LYLN), and 2211–2299 (VTDL…LKPT). N-linked (GlcNAc...) asparagine glycosylation occurs at Asn-1512. N-linked (GlcNAc...) asparagine glycosylation occurs at Asn-1767. N-linked (GlcNAc...) asparagine glycans are attached at residues Asn-2210 and Asn-2273. The VWFA 4 domain occupies 2327–2500 (DIVFLTDASW…DAFEKIQDNL (174 aa)). Residues 2455 to 2750 (SGFSVFVVGV…NACTCTQDSV (296 aa)) are nonhelical region (NC3). In terms of domain architecture, Laminin G-like spans 2524-2716 (GFKMLESYNL…IQNFDIVCSP (193 aa)). N-linked (GlcNAc...) asparagine glycans are attached at residues Asn-2532 and Asn-2683. 2 disordered regions span residues 2749-2900 (SVGP…GDRG) and 2935-3080 (PNDY…EGEP). 3 consecutive Collagen-like domains span residues 2751–2802 (GPPG…GPNG), 2807–2858 (GEPG…GPRG), and 2859–2900 (PPGP…GDRG). The segment at 2751-2902 (GPPGPPGPPG…KGEKGDRGDI (152 aa)) is triple-helical region (COL2) with 1 imperfection. Composition is skewed to pro residues over residues 2752-2761 (PPGPPGPPGG) and 2788-2798 (PPGPQGPPGPQ). Residues 2821 to 2830 (PGLPGRSGTP) are compositionally biased toward low complexity. The span at 2832 to 2841 (LPGPPGPVGP) shows a compositional bias: pro residues. Composition is skewed to low complexity over residues 2842 to 2854 (PGERGFTGKDGPT) and 2865 to 2878 (APGVPGVAGPSGKP). Residues 2899–2901 (RGD) carry the Cell attachment site motif. The segment at 2903–2945 (ASQNMMRAVARQVCEQLINGQMSRFNQMLNQIPNDYYSNRNQP) is nonhelical region (NC2). A compositionally biased stretch (polar residues) spans 2935-2944 (PNDYYSNRNQ). Pro residues predominate over residues 2945 to 2954 (PGPPGPPGPP). Positions 2945-2994 (PGPPGPPGPPGAAGTRGEPGPGGRPGFPGPPGVQGPPGERGMPGEKGERG) constitute a Collagen-like 4 domain. The tract at residues 2946–3048 (GPPGPPGPPG…RGPPGPPGYC (103 aa)) is triple-helical region (COL1) with 2 imperfections. Positions 2961-2970 (GEPGPGGRPG) are enriched in gly residues. Residues 3010-3024 (QGESRTGPPGSTGSR) show a composition bias toward low complexity. Residues 3049-3124 (DSSQCASIPY…SLSRKAKRKP (76 aa)) form a nonhelical region (NC1) region.

This sequence belongs to the fibril-associated collagens with interrupted helices (FACIT) family. In terms of assembly, trimer of identical chains each containing 190 kDa of non-triple-helical sequences. In terms of processing, the triple-helical tail is stabilized by disulfide bonds at each end. Prolines at the third position of the tripeptide repeating unit (G-X-Y) are hydroxylated in some or all of the chains. Post-translationally, O-glycosylated; glycosaminoglycan of chondroitin-sulfate type. In terms of tissue distribution, type XII collagen is present in tendons, ligaments, perichondrium, and periosteum, all dense connective tissues containing type I collagen.

The protein resides in the secreted. It localises to the extracellular space. It is found in the extracellular matrix. Functionally, type XII collagen interacts with type I collagen-containing fibrils, the COL1 domain could be associated with the surface of the fibrils, and the COL2 and NC3 domains may be localized in the perifibrillar matrix. This chain is Collagen alpha-1(XII) chain (COL12A1), found in Gallus gallus (Chicken).